The chain runs to 433 residues: tRNA-2-methylthio-N(6)-dimethylallyladenosine synthase (433 aa).

In terms of domain architecture, MTTase N-terminal spans 4 to 119 (KKLFIQTLGC…ITQAIKTPKF (116 aa)). Residues C13, C50, C82, C151, C155, and C158 each contribute to the [4Fe-4S] cluster site. Residues 137–370 (RNSIYKSYIN…QNRHSEILDK (234 aa)) form the Radical SAM core domain. Positions 373-433 (KKQENKTFKV…KRMVLYGEIV (61 aa)) constitute a TRAM domain.

The protein belongs to the methylthiotransferase family. MiaB subfamily. Monomer. [4Fe-4S] cluster serves as cofactor.

Its subcellular location is the cytoplasm. The catalysed reaction is N(6)-dimethylallyladenosine(37) in tRNA + (sulfur carrier)-SH + AH2 + 2 S-adenosyl-L-methionine = 2-methylsulfanyl-N(6)-dimethylallyladenosine(37) in tRNA + (sulfur carrier)-H + 5'-deoxyadenosine + L-methionine + A + S-adenosyl-L-homocysteine + 2 H(+). In terms of biological role, catalyzes the methylthiolation of N6-(dimethylallyl)adenosine (i(6)A), leading to the formation of 2-methylthio-N6-(dimethylallyl)adenosine (ms(2)i(6)A) at position 37 in tRNAs that read codons beginning with uridine. The polypeptide is tRNA-2-methylthio-N(6)-dimethylallyladenosine synthase (Campylobacter jejuni subsp. jejuni serotype O:2 (strain ATCC 700819 / NCTC 11168)).